Reading from the N-terminus, the 156-residue chain is Small ribosomal subunit protein uS7 (156 aa).

It belongs to the universal ribosomal protein uS7 family. In terms of assembly, part of the 30S ribosomal subunit. Contacts proteins S9 and S11.

In terms of biological role, one of the primary rRNA binding proteins, it binds directly to 16S rRNA where it nucleates assembly of the head domain of the 30S subunit. Is located at the subunit interface close to the decoding center, probably blocks exit of the E-site tRNA. In Dechloromonas aromatica (strain RCB), this protein is Small ribosomal subunit protein uS7.